The primary structure comprises 257 residues: tRNA (guanine-N(1)-)-methyltransferase (257 aa).

S-adenosyl-L-methionine is bound by residues glycine 113 and 133 to 138 (IGDYVL).

This sequence belongs to the RNA methyltransferase TrmD family. As to quaternary structure, homodimer.

It is found in the cytoplasm. It carries out the reaction guanosine(37) in tRNA + S-adenosyl-L-methionine = N(1)-methylguanosine(37) in tRNA + S-adenosyl-L-homocysteine + H(+). Functionally, specifically methylates guanosine-37 in various tRNAs. This is tRNA (guanine-N(1)-)-methyltransferase from Cronobacter sakazakii (strain ATCC BAA-894) (Enterobacter sakazakii).